We begin with the raw amino-acid sequence, 472 residues long: Glycogen synthase (472 aa).

Lys16 is an ADP-alpha-D-glucose binding site.

The protein belongs to the glycosyltransferase 1 family. Bacterial/plant glycogen synthase subfamily.

It carries out the reaction [(1-&gt;4)-alpha-D-glucosyl](n) + ADP-alpha-D-glucose = [(1-&gt;4)-alpha-D-glucosyl](n+1) + ADP + H(+). Its pathway is glycan biosynthesis; glycogen biosynthesis. Synthesizes alpha-1,4-glucan chains using ADP-glucose. The protein is Glycogen synthase of Jannaschia sp. (strain CCS1).